The following is a 473-amino-acid chain: Pre-mRNA-splicing factor PRP46 (473 aa).

Positions 1-14 (MSTSLETPSGTSAG) are enriched in polar residues. Disordered stretches follow at residues 1–21 (MSTS…VASG) and 103–126 (GPNV…QAVA). WD repeat units lie at residues 180–219 (GHMG…LKLS), 222–261 (GHIS…VIRH), 264–303 (GHFS…NIFT), 306–347 (GHTS…NTLT), 349–388 (HKKS…FVNN), 391–429 (GHEA…PFQH), and 440–473 (DAEA…SEQA).

This sequence belongs to the WD repeat PRL1/PRL2 family. Associated with the spliceosome.

Its subcellular location is the cytoplasm. It is found in the nucleus. Functionally, involved in pre-mRNA splicing and required for cell cycle progression at G2/M. The protein is Pre-mRNA-splicing factor PRP46 (PRP46) of Cryptococcus neoformans var. neoformans serotype D (strain B-3501A) (Filobasidiella neoformans).